The following is a 348-amino-acid chain: WRKY transcription factor WRKY71 (348 aa).

Residues 50–84 (VAALEAELKRMGAENRQLSEMLAAVAAKYEALQSQ) adopt a coiled-coil conformation. Disordered regions lie at residues 91–141 (ASAN…APHH) and 246–287 (GEHN…APVV). A compositionally biased stretch (low complexity) spans 102–114 (NQSSTSEGGSVSP). Residues 116-122 (RKRKSES) carry the Nuclear localization signal motif. Positions 126-136 (SPPPPPPPHPH) are enriched in pro residues. Positions 187 to 253 (DLSLVVKDGY…YEGEHNHGQP (67 aa)) form a DNA-binding region, WRKY. Residues 267–348 (SGKSAGKPPH…RILELSPTKD (82 aa)) are transcription repression of gibberellic acid (GA)-induced promoters. Residues 275-286 (PHAPAAAPPAPV) are compositionally biased toward pro residues.

The protein belongs to the WRKY group II-a family. As to quaternary structure, interacts with WRKY51; this interaction promotes W box binding of the complex WRKY51/WRKY71 in a zinc ion-dependent manner. As to expression, highly expressed in aleurone cells. In seeds, predominantly present in the plumule, radicle and scutellum of the embryo. Expressed in roots, stems, young leaves and spikelets.

The protein localises to the nucleus. Its function is as follows. Transcription repressor. Interacts specifically with the W box (5'-(T)TGAC[CT]-3'), a frequently occurring elicitor-responsive cis-acting element. Represses specifically gibberellic acid (GA)-induced promoters in aleurone cells, probably by interfering with GAM1. Regulates, probably indirectly, the activation of defense-related genes such as GF14E during defense response. Modulates plant innate immunity against X.oryzae pv. oryzae (Xoo). Confers resistance to the virulent bacterial pathogen X.oryzae pv. oryzae (Xoo) 13751, probably via the regulation of NPR1 and PR1b defense signaling pathways. This is WRKY transcription factor WRKY71 from Oryza sativa subsp. indica (Rice).